The chain runs to 503 residues: Nondiscriminating glutamyl-tRNA synthetase EARS2, mitochondrial (503 aa).

The transit peptide at 1–22 (MKILRGVSRQMCTSRPEVRVRF) directs the protein to the mitochondrion. Residue 21 to 23 (RFA) participates in L-glutamate binding. The 'HIGH' region signature appears at 26-34 (PTGFLHLGG). An ATP-binding site is contributed by H31. Residues E57, 209 to 213 (YHLAS), and R227 each bind L-glutamate. Residues E230 and 265-269 (KLSKR) contribute to the ATP site. Residues 265-269 (KLSKR) carry the 'KMSKS' region motif.

It belongs to the class-I aminoacyl-tRNA synthetase family. Glutamate--tRNA ligase type 1 subfamily.

The protein localises to the mitochondrion matrix. The catalysed reaction is tRNA(Glx) + L-glutamate + ATP = L-glutamyl-tRNA(Glx) + AMP + diphosphate. The enzyme catalyses tRNA(Glu) + L-glutamate + ATP = L-glutamyl-tRNA(Glu) + AMP + diphosphate. It carries out the reaction tRNA(Gln) + L-glutamate + ATP = L-glutamyl-tRNA(Gln) + AMP + diphosphate. Non-discriminating glutamyl-tRNA synthetase that catalyzes aminoacylation of both mitochondrial tRNA(Glu) and tRNA(Gln) and participates in RNA aminoacylation for mitochondrial protein translation. Attachs glutamate to tRNA(Glu) or tRNA(Gln) in a two-step reaction: glutamate is first activated by ATP to form Glu-AMP and then transferred to the acceptor end of tRNA(Glu) or tRNA(Gln). This chain is Nondiscriminating glutamyl-tRNA synthetase EARS2, mitochondrial, found in Danio rerio (Zebrafish).